The sequence spans 686 residues: MKPSWLQCRKVTGAGGLGGSLPASSPARGAGPARRAYVAPGPRGALGGRGCRALSSGGGEYKTHFAASVTDPERFWGKAAEQISWYKPWTKTLENRHSPSTSWFVEGMLNICYNAIDRHIENGKGDKIAIIYDSPVTNTKATITYKEVLEQVSKLAGVLVKHGVKKGDTVVIYMPMIPQAMYAMLACARIGAIHSLIFGGFASKELSTRIDHAKPKLVITASFGIEPGRKVEYVPLVEEALRIGQHKPDKVLIYNRPHTDMVPLAPGYYLDWDEELSKAQSHDCVPVLSEHPLYILYTSGTTGLPKGVVRPTGGYAVMLNWSMSSIYGLKPGEVWWAASDLGWVVGHSYICYGPLLHGNTTVLYEGKPVGTPDAGAYFRVLAEHGVAALFTAPTAIRAIRQQDPGAALGKQYSLTRFKTLFVAGERCDVETLEWSKKVFRVPVLDHWWQTETGSPITASCIGLGNSKTPPPGQAGKSVPGYNVMILDDNMQKLKARCLGNIVVKLPLPPGAFSGLWKNQEAFKHLYFEKFPGYYDTMDAGYMDEEGYVYVMSRVDDVINVAGHRISAGALEESILSLGIVADCAVVGKEDSLKGHIPLALCVLKKDINTTEEHVLEEIVKHVRQTIGPVAAFRKAVFVKQLPKTRSGKIPRSTLSALVNGKPYKVSPTIEDPGIFEHIEAMLKQAS.

A mitochondrion-targeting transit peptide spans M1–G29. E226–R229 contributes to the CoA binding site. Residues G424 to R426 and D445 to T450 each bind ATP. K517 carries the N6-succinyllysine modification. An N6-acetyllysine modification is found at K523. ATP is bound by residues D538, R553, and R564. CoA is bound at residue R623.

The protein belongs to the ATP-dependent AMP-binding enzyme family.

It localises to the mitochondrion matrix. It carries out the reaction acetate + ATP + CoA = acetyl-CoA + AMP + diphosphate. The catalysed reaction is propanoate + ATP + CoA = propanoyl-CoA + AMP + diphosphate. It catalyses the reaction butanoate + ATP + CoA = butanoyl-CoA + AMP + diphosphate. Its function is as follows. Catalyzes the synthesis of acetyl-CoA from short-chain fatty acids. Propionate is the preferred substrate but can also utilize acetate and butyrate with a much lower affinity. The sequence is that of Acyl-CoA synthetase short-chain family member 3, mitochondrial (ACSS3) from Bos taurus (Bovine).